Here is a 503-residue protein sequence, read N- to C-terminus: MATAIPQRQLFVAGEWRAPALGRRLPVVNPATESPIGEIPAGTAEDVDAAVAAAREALKRNRGRDWARAPGAVRAKYLRAIAAKIIERKSELARLETLDCGKPLDEAAWDMDDVAGCFEYFADLAESLDKRQNAPVSLPMENFKCYLRKEPIGVVGLITPWNYPLLMATWKVAPALAAGCTAVLKPSELASVTCLELADVCKEVGLPSGVLNIVTGLGSEAGAPLSSHPGVDKVAFTGSYETGKKIMASAAPMVKPVSLELGGKSPIVVFDDVDVEKAVEWTLFGCFWTNGQICSATSRLILHKKIAKEFQERMVAWAKNIKVSDPLEEGCRLGPVVSEGQYEKIKQFVSTAKSQGATILTGGVRPKHLEKGFYIEPTIITDVDTSMQIWREEVFGPVLCVKEFSTEEEAIELANDTHYGLAGAVLSGDRERCQRLTEEIDAGIIWVNCSQPCFCQAPWGGNKRSGFGRELGEGGIDNYLSVKQVTEYASDEPWGWYKSPSKL.

Tryptophan 161 to tryptophan 170 lines the betaine aldehyde pocket. Glycine 238–glycine 243 contributes to the NAD(+) binding site. Betaine aldehyde-binding positions include glutamate 260, glutamine 292–serine 295, and cysteine 453. Catalysis depends on residues glutamate 260 and cysteine 294. 4-aminobutanal is bound by residues glutamate 260–leucine 261 and cysteine 294. Position 459 (tryptophan 459) interacts with 4-aminobutanal. Positions serine 501–leucine 503 match the Microbody targeting signal motif.

The protein belongs to the aldehyde dehydrogenase family. As to quaternary structure, homodimer.

Its subcellular location is the peroxisome. The protein resides in the cytoplasm. The catalysed reaction is betaine aldehyde + NAD(+) + H2O = glycine betaine + NADH + 2 H(+). It participates in amine and polyamine biosynthesis; betaine biosynthesis via choline pathway; betaine from betaine aldehyde: step 1/1. Its function is as follows. Dehydrogenase that can use N-acetyl-c-aminobutyraldehyde (NAGABald), gamma-guanidinobutyraldehyde (GGBald), betaine aldehyde (Bet-ald), gamma-aminobutyraldehyde (GAB-ald), acetaldehyde, 4-aminobutylaldehyde (AB-ald), 3-aminopropionaldehyde (AP-ald), 4-N-trimethylaminobutyraldehyde (TMAB-ald) and 3-N-trimethylaminopropionaldehyde (TMAP-ald) as substrates. Catalyzes the oxidation of GAB-ald more efficiently than Bet-ald. Mediates the conversion of GAB-ald into gamma-aminobutyric acid (GABA), and prevents the formation of 2-acetyl-1-pyrroline (2AP) which gives fragrant rice its aromatic properties. This Oryza sativa subsp. indica (Rice) protein is Betaine aldehyde dehydrogenase 2 (BADH2).